We begin with the raw amino-acid sequence, 7192 residues long: Nonribosomal peptide synthetase gloA (7192 aa).

A compositionally biased stretch (polar residues) spans 1–48 (MTPSRSLENGEKQMNWNESPQTASPKNVLRDSNSNGNYVNGHGTNING). The interval 1–52 (MTPSRSLENGEKQMNWNESPQTASPKNVLRDSNSNGNYVNGHGTNINGDGSD) is disordered. Residues 105 to 181 (HSTSKFKEEF…GLFATANFRP (77 aa)) enclose the Carrier 1 domain. An O-(pantetheine 4'-phosphoryl)serine modification is found at S142. The condensation 1 stretch occupies residues 239-634 (EDVYPCTPLQ…TYTVQCLCNP (396 aa)). Positions 675–1047 (QDQVNIQPAK…SLMYLGRCDS (373 aa)) are adenylation 1. Residues 1190–1266 (APSTDAEKQV…DLAFVIQRRL (77 aa)) form the Carrier 2 domain. Position 1227 is an O-(pantetheine 4'-phosphoryl)serine (S1227). A condensation 2 region spans residues 1316-1736 (EDIYPCTPLQ…MSWLSDYDEE (421 aa)). The tract at residues 1758-2154 (QEQTKLRPNA…GRRDTQIKIR (397 aa)) is adenylation 2. A Carrier 3 domain is found at 2288 to 2364 (APSTREECLV…ELAELLAKRS (77 aa)). S2325 is modified (O-(pantetheine 4'-phosphoryl)serine). Residues 2407 to 2829 (VEDVYPCTPL…LIAPEDQEQI (423 aa)) are condensation 3. The segment at 2849-3245 (YKQVMARPQA…GRRDDQIKIR (397 aa)) is adenylation 3. The region spanning 3378-3455 (TPSTKMEKVI…DLASVMTEHR (78 aa)) is the Carrier 4 domain. S3415 is modified (O-(pantetheine 4'-phosphoryl)serine). Residues 3502–3891 (EDIYPCTALQ…NGVLDQFVYI (390 aa)) form a condensation 4 region. Residues 3920 to 4320 (QEQALARPTA…ARRDMQVKIR (401 aa)) are adenylation 4. The Carrier 5 domain maps to 4453-4529 (LPSTQVELQL…ELAVILDGRK (77 aa)). O-(pantetheine 4'-phosphoryl)serine is present on S4490. The condensation 5 stretch occupies residues 4574–4971 (EDIYPCTPLQ…QFEYVVQKFH (398 aa)). An adenylation 5 region spans residues 5013-5414 (DDHVAARPMA…GRQDLQVKIR (402 aa)). Residues 5551–5627 (APDTDLGRLI…DLVNTLSNRS (77 aa)) enclose the Carrier 6 domain. O-(pantetheine 4'-phosphoryl)serine is present on S5588. Residues 5674-6071 (EDVYPSTPLQ…CVVQRILTQS (398 aa)) form a condensation 6 region. The adenylation 6 stretch occupies residues 6111–6507 (QAQVKKSPAA…GRRDLQVKIR (397 aa)). The 77-residue stretch at 6645–6721 (NPSTTMERQL…DLAVVLTDRL (77 aa)) folds into the Carrier 7 domain. The residue at position 6682 (S6682) is an O-(pantetheine 4'-phosphoryl)serine. Residues 6795–7178 (NGPCDTRALK…NPLSPVKQVL (384 aa)) are condensation 7.

Belongs to the NRP synthetase family.

The protein operates within mycotoxin biosynthesis. Functionally, nonribosomal peptide synthetase; part of the gene cluster that mediates the biosynthesis of pneumocandins, lipohexapeptides of the echinocandin family that prevent fungal cell wall formation by non-competitive inhibition of beta-1,3-glucan synthase. The 10,12-dimethylmyristoyl side chain is synthesized by the reducing polyketide synthase gloL/GLPKS4. The thioesterase gloN/GLHYD exclusively interacts with gloL/GLPKS4 to maintain turnover of the polyketide side chain. The 10R,12S-dimethylmyristic acid is then transferred to the first thiolation domain of the nonribosomal peptide synthetase gloA/GLNRPS4 by the acyl-AMP ligase gloD/GLligase, followed by its acylation to L-ornithine to trigger elongation of the cyclic hexapeptide. L-ornithine, 4R-hydroxyl-L-proline (generated from L-proline by the dioxygenase gloF/GLOXY2), 3S-hydroxyl-L-homotyrosine (generated by gloG/GLHtyB, gloH/GLHtyA, gloI/GLHtyC, gloJ/GLHtyD and hydroxylated at C-3 by the dioxygenase gloM/GLOXY1), 3R-hydroxyl-L-glutamine (generated from L-glutamine probably by the dioxygenase gloE/GLOXY3) and 3S-hydroxyl-L-proline (generated from L-proline by the dioxygenase gloF/GLOXY2 to yield pneumocandin B0), or 3S-hydroxyl-4S-methyl-L-proline (generated from L-leucine by the dioxygenase gloC/GLOXY4 to yield pneumocandin A0) are sequentially added to the growing chain. The last C domain of gloA/GLNRPS4 is proposed to be responsible for cyclization by condensation to form the peptide bond between L-ornithine and 3S-hydroxyl-4S-methyl-L-proline (for pneumocandin A0) or 3S-hydroxyl-L-proline (for pneumocandin B0). Finally, the subsequent C-4 hydroxylation of 3S-hydroxyl-L-homotyrosine and L-ornithine dihydroxylation at C-4 and C-5 are performed by the cytochrome P450 monooxygenases gloP/GLP450-1 and gloO/GLP450-2, respectively. This Glarea lozoyensis (strain ATCC 20868 / MF5171) protein is Nonribosomal peptide synthetase gloA.